A 180-amino-acid polypeptide reads, in one-letter code: Translation initiation factor IF-3 (180 aa).

Belongs to the IF-3 family. As to quaternary structure, monomer.

Its subcellular location is the cytoplasm. IF-3 binds to the 30S ribosomal subunit and shifts the equilibrium between 70S ribosomes and their 50S and 30S subunits in favor of the free subunits, thus enhancing the availability of 30S subunits on which protein synthesis initiation begins. The polypeptide is Translation initiation factor IF-3 (Shewanella baltica (strain OS223)).